A 311-amino-acid chain; its full sequence is Malate dehydrogenase (311 aa).

NAD(+) is bound by residues 7–13 (GAAGGIG) and D34. Residues R81 and R87 each coordinate substrate. NAD(+) contacts are provided by residues N94 and 117-119 (ITN). Substrate is bound by residues N119 and R153. Catalysis depends on H177, which acts as the Proton acceptor. Residue M227 coordinates NAD(+).

It belongs to the LDH/MDH superfamily. MDH type 1 family. Homodimer.

The catalysed reaction is (S)-malate + NAD(+) = oxaloacetate + NADH + H(+). In terms of biological role, catalyzes the reversible oxidation of malate to oxaloacetate. The polypeptide is Malate dehydrogenase (Pseudoalteromonas atlantica (strain T6c / ATCC BAA-1087)).